We begin with the raw amino-acid sequence, 253 residues long: UPF0246 protein lhv_1883 (253 aa).

This sequence belongs to the UPF0246 family.

In Lactobacillus helveticus (strain DPC 4571), this protein is UPF0246 protein lhv_1883.